The following is a 399-amino-acid chain: MSQKQPQSPNQTLISITNDTESSSSVVSNDTTNKGWTGDNSPGIEALCAIYITYAVIISVGILGNAILIKVFFKTKSMQTVPNIFITSLALGDLLLLLTCVPVDATHYLAEGWLFGRIGCKVLSFIRLTSVGVSVFTLTILSADRYKAVVKPLERQPSNAILKTCAKAGCIWIMSMIFALPEAIFSNVHTLRDPNKNMTSEWCAFYPVSEKLLQEIHALLSFLVFYIIPLSIISVYYSLIARTLYKSTLNIPTEEQSHARKQVESRKRIAKTVLVLVALFALCWLPNHLLNLYHSFTHKAYEDSSAIHFIVTIFSRVLAFSNSCVNPFALYWLSKTFQKQFKAQLFCCKGELPEPPLAATPLNSLAVMGRVSGTENTHISEIGVASFIGRPMKKEENRV.

The Extracellular segment spans residues 1–41 (MSQKQPQSPNQTLISITNDTESSSSVVSNDTTNKGWTGDNS). N-linked (GlcNAc...) asparagine glycans are attached at residues Asn10 and Asn18. A helical transmembrane segment spans residues 42-63 (PGIEALCAIYITYAVIISVGIL). Residues 64-82 (GNAILIKVFFKTKSMQTVP) lie on the Cytoplasmic side of the membrane. A helical membrane pass occupies residues 83-103 (NIFITSLALGDLLLLLTCVPV). Over 104–121 (DATHYLAEGWLFGRIGCK) the chain is Extracellular. An intrachain disulfide couples Cys120 to Cys203. A helical transmembrane segment spans residues 122–143 (VLSFIRLTSVGVSVFTLTILSA). Over 144 to 163 (DRYKAVVKPLERQPSNAILK) the chain is Cytoplasmic. The chain crosses the membrane as a helical span at residues 164 to 184 (TCAKAGCIWIMSMIFALPEAI). The Extracellular segment spans residues 185–220 (FSNVHTLRDPNKNMTSEWCAFYPVSEKLLQEIHALL). The chain crosses the membrane as a helical span at residues 221–241 (SFLVFYIIPLSIISVYYSLIA). Residues 242 to 272 (RTLYKSTLNIPTEEQSHARKQVESRKRIAKT) lie on the Cytoplasmic side of the membrane. A helical transmembrane segment spans residues 273–293 (VLVLVALFALCWLPNHLLNLY). The Extracellular segment spans residues 294–313 (HSFTHKAYEDSSAIHFIVTI). Residues 314-333 (FSRVLAFSNSCVNPFALYWL) traverse the membrane as a helical segment. At 334 to 399 (SKTFQKQFKA…RPMKKEENRV (66 aa)) the chain is on the cytoplasmic side. A lipid anchor (S-palmitoyl cysteine) is attached at Cys347.

It belongs to the G-protein coupled receptor 1 family. In terms of assembly, interacts with C6orf89. As to expression, mainly in uteri of pregnant animals.

It is found in the cell membrane. Its function is as follows. Role in sperm cell division, maturation, or function. The relative order of ligand affinity is GRP = neuromedin-C &gt;&gt; neuromedin-B. This receptor mediates its action by association with G proteins that activate a phosphatidylinositol-calcium second messenger system. This is Bombesin receptor subtype-3 (BRS3) from Cavia porcellus (Guinea pig).